Here is a 265-residue protein sequence, read N- to C-terminus: Undecaprenyl-diphosphatase (265 aa).

Transmembrane regions (helical) follow at residues 42–62, 90–110, 115–135, 160–182, 195–215, 222–242, and 245–265; these read EAIP…IVYF, ISFL…LLLF, VEIS…VTGI, VAQG…ALLL, FLMS…MGMV, IVGL…FLKV, and KVDF…TMFL.

The protein belongs to the UppP family.

The protein localises to the cell membrane. It catalyses the reaction di-trans,octa-cis-undecaprenyl diphosphate + H2O = di-trans,octa-cis-undecaprenyl phosphate + phosphate + H(+). In terms of biological role, catalyzes the dephosphorylation of undecaprenyl diphosphate (UPP). This chain is Undecaprenyl-diphosphatase, found in Methanococcoides burtonii (strain DSM 6242 / NBRC 107633 / OCM 468 / ACE-M).